A 630-amino-acid polypeptide reads, in one-letter code: Coiled-coil domain-containing protein 120 (630 aa).

Positions 31 to 70 (RLRGLLDRQRTLQEALSLKLQELRKVCLQEAELTGQLPPE) are involved in CYTH2-binding. Residues 109–173 (ELALEALERE…LRDVRARLGL (65 aa)) are a coiled coil. Composition is skewed to low complexity over residues 212–222 (HSESSSLSESG) and 282–297 (ASPT…SASS). 2 disordered regions span residues 212–435 (HSES…GAPR) and 457–534 (GGGT…NPLL). The segment covering 326–335 (RQWSGSQDSQ) has biased composition (polar residues). Phosphoserine is present on residues Ser358 and Ser360. Over residues 421 to 434 (ARPSSAAPASRGAP) the composition is skewed to low complexity. Arg435 is subject to Omega-N-methylarginine.

In terms of assembly, interacts with NIN and CEP170; leading to recruit them to centrosomes. Directly interacts with CYTH2; this interaction stabilizes CCDC120, possibly by preventing ubiquitination. In terms of processing, ubiquitinated; interaction with CYTH2 may prevent ubiquitination.

It localises to the cytoplasm. The protein localises to the cytoskeleton. The protein resides in the microtubule organizing center. It is found in the centrosome. Its subcellular location is the centriole. It localises to the cell projection. The protein localises to the neuron projection. The protein resides in the growth cone. It is found in the endosome. Functionally, centriolar protein required for centriole subdistal appendage assembly and microtubule anchoring in interphase cells. Together with CCDC68, cooperate with subdistal appendage components ODF2, NIN and CEP170 for hierarchical subdistal appendage assembly. Recruits NIN and CEP170 to centrosomes. Also required for neurite growth. Localizes CYTH2 to vesicles to allow its transport along neurites, and subsequent ARF6 activation and neurite growth. This is Coiled-coil domain-containing protein 120 (CCDC120) from Homo sapiens (Human).